Here is a 223-residue protein sequence, read N- to C-terminus: Deoxyribose-phosphate aldolase (223 aa).

The active-site Proton donor/acceptor is the Asp-89. Lys-152 serves as the catalytic Schiff-base intermediate with acetaldehyde. Catalysis depends on Lys-181, which acts as the Proton donor/acceptor.

This sequence belongs to the DeoC/FbaB aldolase family. DeoC type 1 subfamily.

It is found in the cytoplasm. The enzyme catalyses 2-deoxy-D-ribose 5-phosphate = D-glyceraldehyde 3-phosphate + acetaldehyde. The protein operates within carbohydrate degradation; 2-deoxy-D-ribose 1-phosphate degradation; D-glyceraldehyde 3-phosphate and acetaldehyde from 2-deoxy-alpha-D-ribose 1-phosphate: step 2/2. Catalyzes a reversible aldol reaction between acetaldehyde and D-glyceraldehyde 3-phosphate to generate 2-deoxy-D-ribose 5-phosphate. This Listeria monocytogenes serotype 4a (strain HCC23) protein is Deoxyribose-phosphate aldolase.